Consider the following 904-residue polypeptide: Alanine--tRNA ligase (904 aa).

His-584, His-588, Cys-687, and His-691 together coordinate Zn(2+).

It belongs to the class-II aminoacyl-tRNA synthetase family. Requires Zn(2+) as cofactor.

It localises to the cytoplasm. It carries out the reaction tRNA(Ala) + L-alanine + ATP = L-alanyl-tRNA(Ala) + AMP + diphosphate. Functionally, catalyzes the attachment of alanine to tRNA(Ala) in a two-step reaction: alanine is first activated by ATP to form Ala-AMP and then transferred to the acceptor end of tRNA(Ala). Also edits incorrectly charged Ser-tRNA(Ala) and Gly-tRNA(Ala) via its editing domain. The protein is Alanine--tRNA ligase of Mycobacterium bovis (strain ATCC BAA-935 / AF2122/97).